Here is a 124-residue protein sequence, read N- to C-terminus: Urease subunit beta (124 aa).

This sequence belongs to the urease beta subunit family. In terms of assembly, heterotrimer of UreA (gamma), UreB (beta) and UreC (alpha) subunits. Three heterotrimers associate to form the active enzyme.

It is found in the cytoplasm. It carries out the reaction urea + 2 H2O + H(+) = hydrogencarbonate + 2 NH4(+). Its pathway is nitrogen metabolism; urea degradation; CO(2) and NH(3) from urea (urease route): step 1/1. In Ureaplasma urealyticum serovar 10 (strain ATCC 33699 / Western), this protein is Urease subunit beta.